We begin with the raw amino-acid sequence, 252 residues long: MPKQADGVRIVAVDAAGKTSRIKAERLEIDYGDGRRLTLTLPNDGWAHLDIEADVAGDDDGDLPVITIQPSACNAVALRVEVVQQPQVADIDLPVAAKLPVLTLEVQKALDGGDKAAAPKKHQIRRWAQAALRTDAEVTVRLVGETEGRALNLGYRGKDYATNVLTFVYGEEGGAPAVEGMPLMGDLVLCVPVVVREAAEQGKALDAHFAHLVVHGMLHLQGLDHEDDAEAEAMETAETNILRGLGYANPYA.

The tract at residues 1–90 (MPKQADGVRI…EVVQQPQVAD (90 aa)) is unknown. The tract at residues 91–252 (IDLPVAAKLP…RGLGYANPYA (162 aa)) is endoribonuclease YbeY. Zn(2+) contacts are provided by histidine 215, histidine 219, and histidine 225.

Belongs to the endoribonuclease YbeY family. Zn(2+) is required as a cofactor.

It localises to the cytoplasm. Single strand-specific metallo-endoribonuclease involved in late-stage 70S ribosome quality control and in maturation of the 3' terminus of the 16S rRNA. This chain is Endoribonuclease YbeY (ybeY), found in Azoarcus sp. (strain BH72).